The chain runs to 596 residues: MTIQTPNGFTLDNSGKRIVVDPVTRIEGHMRVEVNVDENNIIRNAVSTGTMWRGIEVILKNRDPRDAWAFTERICGVCTGTHALTSVRAVENALGITIPDNANSIRNLMQLALQVHDHVVHFYHLHALDWVDVVSALSADPKATSALAQSISDWPLSSPGYFKDIQTRLKKFVESGQLGPFKNGYWGNASYKLPPEANLMAVAHYLEALDFQKEIVKIHTIFGGKNPHPNWLVGGVPCPINVDGTGAVGAINMERLNMVTSIIDQLIEFNDKVYVPDIMAIGSFYKDWLYGGGLSGKNVLAYGDVPEHANDYSEASLKLPRGAIINGNLAEVFPVDHADPEQIQEFVTHSWYKYPDESKGLHPWDGITEPHYELGPNAKGTKTNIEQLDEGAKYSWIKAPRWRGNAMEVGPLARWVIGYAQNKAEFKDPVDKVLKDLGLPVTALFSTLGRTAARALESQWAGYQMRYFQNKLIANIKAGDSNTAFVDKWKPETWPKEVKGVGFTEAPRGRLAHWIRIKDGKIDNYQCVVPTTWNGSPRDPTGNIGAFEASLMDTPMSNPTQPLEILRTIHSFDPCLACSTHVMSPDGQEMARVQVR.

Ni(2+) is bound by residues Cys75, Cys78, Cys575, and Cys578.

The protein belongs to the [NiFe]/[NiFeSe] hydrogenase large subunit family. As to quaternary structure, heterodimer of a large and a small subunit. The cofactor is Ni(2+).

Its subcellular location is the cell membrane. The catalysed reaction is H2 + A = AH2. Its function is as follows. This enzyme recycles the H(2) produced by nitrogenase to increase the production of ATP and to protect nitrogenase against inhibition or damage by O(2) under carbon- or phosphate-limited conditions. The chain is Uptake hydrogenase large subunit (hupB) from Rhizobium leguminosarum bv. viciae.